Here is a 503-residue protein sequence, read N- to C-terminus: Probable Xaa-Pro aminopeptidase TSTA_094700 (503 aa).

Residues D277, D288, E428, and E467 each contribute to the Mn(2+) site.

Belongs to the peptidase M24B family. It depends on Mn(2+) as a cofactor.

The enzyme catalyses Release of any N-terminal amino acid, including proline, that is linked to proline, even from a dipeptide or tripeptide.. Its function is as follows. Catalyzes the removal of a penultimate prolyl residue from the N-termini of peptides. This chain is Probable Xaa-Pro aminopeptidase TSTA_094700, found in Talaromyces stipitatus (strain ATCC 10500 / CBS 375.48 / QM 6759 / NRRL 1006) (Penicillium stipitatum).